The primary structure comprises 369 residues: Chorismate synthase (369 aa).

Residues Arg48 and Arg54 each contribute to the NADP(+) site. Residues 125 to 127 (RSS), 238 to 239 (NA), Gly278, 293 to 297 (KPTSS), and Arg319 contribute to the FMN site.

Belongs to the chorismate synthase family. Homotetramer. FMNH2 is required as a cofactor.

The enzyme catalyses 5-O-(1-carboxyvinyl)-3-phosphoshikimate = chorismate + phosphate. Its pathway is metabolic intermediate biosynthesis; chorismate biosynthesis; chorismate from D-erythrose 4-phosphate and phosphoenolpyruvate: step 7/7. In terms of biological role, catalyzes the anti-1,4-elimination of the C-3 phosphate and the C-6 proR hydrogen from 5-enolpyruvylshikimate-3-phosphate (EPSP) to yield chorismate, which is the branch point compound that serves as the starting substrate for the three terminal pathways of aromatic amino acid biosynthesis. This reaction introduces a second double bond into the aromatic ring system. This Burkholderia thailandensis (strain ATCC 700388 / DSM 13276 / CCUG 48851 / CIP 106301 / E264) protein is Chorismate synthase.